The chain runs to 706 residues: Polyribonucleotide nucleotidyltransferase (706 aa).

Residues Asp-486 and Asp-492 each contribute to the Mg(2+) site. The KH domain occupies Pro-552–Ile-611. An S1 motif domain is found at Gly-621–Lys-689.

This sequence belongs to the polyribonucleotide nucleotidyltransferase family. The cofactor is Mg(2+).

The protein localises to the cytoplasm. The catalysed reaction is RNA(n+1) + phosphate = RNA(n) + a ribonucleoside 5'-diphosphate. Its function is as follows. Involved in mRNA degradation. Catalyzes the phosphorolysis of single-stranded polyribonucleotides processively in the 3'- to 5'-direction. This is Polyribonucleotide nucleotidyltransferase from Thiobacillus denitrificans (strain ATCC 25259 / T1).